A 376-amino-acid polypeptide reads, in one-letter code: S-adenosylmethionine synthase (376 aa).

Histidine 14 provides a ligand contact to ATP. Aspartate 16 is a Mg(2+) binding site. Glutamate 42 provides a ligand contact to K(+). Residues glutamate 55 and glutamine 98 each coordinate L-methionine. The interval 98–108 (QSPEIALGISS) is flexible loop. ATP is bound by residues 158 to 160 (DGK), 224 to 225 (RF), aspartate 233, 239 to 240 (RK), alanine 256, and lysine 260. An L-methionine-binding site is contributed by aspartate 233. Lysine 264 provides a ligand contact to L-methionine.

The protein belongs to the AdoMet synthase family. As to quaternary structure, homotetramer; dimer of dimers. It depends on Mg(2+) as a cofactor. The cofactor is K(+).

The protein resides in the cytoplasm. It catalyses the reaction L-methionine + ATP + H2O = S-adenosyl-L-methionine + phosphate + diphosphate. It participates in amino-acid biosynthesis; S-adenosyl-L-methionine biosynthesis; S-adenosyl-L-methionine from L-methionine: step 1/1. Its function is as follows. Catalyzes the formation of S-adenosylmethionine (AdoMet) from methionine and ATP. The overall synthetic reaction is composed of two sequential steps, AdoMet formation and the subsequent tripolyphosphate hydrolysis which occurs prior to release of AdoMet from the enzyme. In Aquifex aeolicus (strain VF5), this protein is S-adenosylmethionine synthase.